The primary structure comprises 607 residues: MKWITLICLLISSSFIESRILFKRDTDADHHKHIADVYTALTERTFKGLTLAIVSQNLQKCSLEELSKLVNEINDFAKSCINDKTPECEKPVGTLFFDKLCADPAVGVNYEWSKECCAKQDPERAQCFKAHRDHEHTSIKPEPEETCKLLKEHPDDLLSAFIHEEARNHPDLYPPAVLALTKQYHKLAEHCCEEEDKEKCFSEKMKQLMKQSHSIEDKQHHFCWILDNFPEKVLKALNLARVSHRYPKAEFKLAHNFTEEVTHFIKDCCHDDMFECMTERLELTEHTCQHKDELSSKLEKCCNIPLLERTYCIVTLENDDVPAELSQPITEFTEDPHVCEKYAENNEVFLGRYLHAVSRKHQELSEQFLLQSAKEYESLLNKCCKTDNPPECYKDGADRFMNEAKERFAYLKQNCDILHEHGEYLFENELLIRYTKKMPQVSDETLIGIAHQMADIGEHCCAVPENQRMPCAEGDLTILIGKMCERQKKTFINNHVAHCCTDSYSGMRSCFTALGPDEDYVPPPVTDDTFHFDDKICTANDKEKQHIKQKFLVKLIKVSPKLEKNHIDECSAEFLKMVQKCCTADEHQPCFDTEKPVLIEHCQKLHP.

The N-terminal stretch at 1–18 (MKWITLICLLISSSFIES) is a signal peptide. The propeptide occupies 19–24 (RILFKR). Albumin domains are found at residues 22-209 (FKRD…KQLM), 210-402 (KQSH…RFMN), and 403-600 (EAKE…VLIE). Residue His-30 participates in Cu cation binding. Intrachain disulfides connect Cys-80–Cys-88, Cys-101–Cys-117, Cys-116–Cys-127, Cys-147–Cys-192, Cys-191–Cys-200, Cys-223–Cys-269, Cys-268–Cys-276, Cys-288–Cys-302, Cys-301–Cys-312, Cys-339–Cys-384, Cys-383–Cys-392, Cys-415–Cys-461, Cys-460–Cys-471, Cys-484–Cys-500, Cys-499–Cys-510, Cys-537–Cys-582, and Cys-581–Cys-590.

The protein belongs to the ALB/AFP/VDB family. As to expression, plasma.

Its subcellular location is the secreted. Its function is as follows. Serum albumin, the main protein of plasma, has a good binding capacity for water, Ca(2+), Na(+), K(+), fatty acids, hormones, bilirubin and drugs. Its main function is the regulation of the colloidal osmotic pressure of blood. The protein is Albumin B (alb-b) of Xenopus laevis (African clawed frog).